Here is a 349-residue protein sequence, read N- to C-terminus: UDP-N-acetylenolpyruvoylglucosamine reductase (349 aa).

Positions 26-197 (FDARARVAAR…VAVTFRLPKA (172 aa)) constitute an FAD-binding PCMH-type domain. Arg173 is a catalytic residue. Ser249 serves as the catalytic Proton donor. Glu345 is a catalytic residue.

The protein belongs to the MurB family. The cofactor is FAD.

The protein localises to the cytoplasm. The catalysed reaction is UDP-N-acetyl-alpha-D-muramate + NADP(+) = UDP-N-acetyl-3-O-(1-carboxyvinyl)-alpha-D-glucosamine + NADPH + H(+). The protein operates within cell wall biogenesis; peptidoglycan biosynthesis. Cell wall formation. In Burkholderia pseudomallei (strain K96243), this protein is UDP-N-acetylenolpyruvoylglucosamine reductase.